A 113-amino-acid polypeptide reads, in one-letter code: Small ribosomal subunit protein bS6 (113 aa).

The protein belongs to the bacterial ribosomal protein bS6 family.

In terms of biological role, binds together with bS18 to 16S ribosomal RNA. This chain is Small ribosomal subunit protein bS6, found in Vesicomyosocius okutanii subsp. Calyptogena okutanii (strain HA).